The sequence spans 306 residues: Dirigent protein 24 (306 aa).

A signal peptide spans 1 to 21 (MAKALSLTIFLFLLIASNVQS). The segment at 36 to 61 (PQVPEEEDDSPQAVTTTPTPIPLPGP) is disordered.

This sequence belongs to the plant dirigent protein family. In terms of assembly, homodimer.

Its subcellular location is the secreted. It is found in the extracellular space. The protein resides in the apoplast. Its function is as follows. Dirigent proteins impart stereoselectivity on the phenoxy radical-coupling reaction, yielding optically active lignans from two molecules of coniferyl alcohol in the biosynthesis of lignans, flavonolignans, and alkaloids and thus plays a central role in plant secondary metabolism. This chain is Dirigent protein 24 (DIR24), found in Arabidopsis thaliana (Mouse-ear cress).